The sequence spans 600 residues: NADH-quinone oxidoreductase subunit C/D (600 aa).

Positions 1–190 (MVNNMTDLTA…DPFELTKAKQ (190 aa)) are NADH dehydrogenase I subunit C. Residues 214-600 (DFMFLNLGPN…IDFVMSDVDR (387 aa)) form an NADH dehydrogenase I subunit D region.

This sequence in the N-terminal section; belongs to the complex I 30 kDa subunit family. In the C-terminal section; belongs to the complex I 49 kDa subunit family. As to quaternary structure, NDH-1 is composed of 13 different subunits. Subunits NuoB, CD, E, F, and G constitute the peripheral sector of the complex.

It localises to the cell inner membrane. The enzyme catalyses a quinone + NADH + 5 H(+)(in) = a quinol + NAD(+) + 4 H(+)(out). Functionally, NDH-1 shuttles electrons from NADH, via FMN and iron-sulfur (Fe-S) centers, to quinones in the respiratory chain. The immediate electron acceptor for the enzyme in this species is believed to be ubiquinone. Couples the redox reaction to proton translocation (for every two electrons transferred, four hydrogen ions are translocated across the cytoplasmic membrane), and thus conserves the redox energy in a proton gradient. The sequence is that of NADH-quinone oxidoreductase subunit C/D from Salmonella paratyphi A (strain ATCC 9150 / SARB42).